Reading from the N-terminus, the 318-residue chain is Methionyl-tRNA formyltransferase (318 aa).

110 to 113 (SLLP) lines the (6S)-5,6,7,8-tetrahydrofolate pocket.

Belongs to the Fmt family.

The catalysed reaction is L-methionyl-tRNA(fMet) + (6R)-10-formyltetrahydrofolate = N-formyl-L-methionyl-tRNA(fMet) + (6S)-5,6,7,8-tetrahydrofolate + H(+). Functionally, attaches a formyl group to the free amino group of methionyl-tRNA(fMet). The formyl group appears to play a dual role in the initiator identity of N-formylmethionyl-tRNA by promoting its recognition by IF2 and preventing the misappropriation of this tRNA by the elongation apparatus. The polypeptide is Methionyl-tRNA formyltransferase (Geobacillus sp. (strain WCH70)).